A 520-amino-acid chain; its full sequence is GMP synthase [glutamine-hydrolyzing] (520 aa).

The Glutamine amidotransferase type-1 domain occupies 8–202 (RLLIIDFGSQ…FVRLAGFTGD (195 aa)). Cysteine 86 functions as the Nucleophile in the catalytic mechanism. Residues histidine 177 and glutamate 179 contribute to the active site. Residues 203 to 395 (WTMDAYREQA…LGLPASFIGR (193 aa)) form the GMPS ATP-PPase domain. 230–236 (SGGVDSS) provides a ligand contact to ATP.

In terms of assembly, homodimer.

It carries out the reaction XMP + L-glutamine + ATP + H2O = GMP + L-glutamate + AMP + diphosphate + 2 H(+). It functions in the pathway purine metabolism; GMP biosynthesis; GMP from XMP (L-Gln route): step 1/1. In terms of biological role, catalyzes the synthesis of GMP from XMP. In Dinoroseobacter shibae (strain DSM 16493 / NCIMB 14021 / DFL 12), this protein is GMP synthase [glutamine-hydrolyzing].